The primary structure comprises 336 residues: Atypical chemokine receptor 1 (336 aa).

The Extracellular portion of the chain corresponds to 1-63 (MGNCLHQAEL…CSLLNDSSLP (63 aa)). N-linked (GlcNAc...) asparagine glycans are attached at residues N16, N27, N33, and N58. 2 disulfide bridges follow: C51-C276 and C129-C195. A helical transmembrane segment spans residues 64-84 (FFILASDLGILASSTVLFMLF). Residues 85-95 (RPLFRWQLCPG) lie on the Cytoplasmic side of the membrane. A helical transmembrane segment spans residues 96–116 (WPVLAQLAVGSALFSIVVPIL). The Extracellular portion of the chain corresponds to 117-129 (APGLGNTHSSALC). The helical transmembrane segment at 130 to 153 (SLGYCVWYGSAFAQALLLGCHASL) threads the bilayer. The Cytoplasmic portion of the chain corresponds to 154–166 (GPKLGAGQVPGLT). A helical membrane pass occupies residues 167–187 (LGLPVGLWGATALLTLPITLA). Residues 188–207 (SGASDGLCTPIYSTELEALQ) lie on the Extracellular side of the membrane. Residues 208-228 (ATHAVACFAIFVLLPLGLFGA) traverse the membrane as a helical segment. Residues 229–244 (KGLKKALGMGPGPWMN) lie on the Cytoplasmic side of the membrane. Residues 245 to 265 (ILWVWFIFWWPHGLVLGLDFL) traverse the membrane as a helical segment. The Extracellular segment spans residues 266-287 (VGSKLSLLPTCLAQQVLDLLLN). A helical transmembrane segment spans residues 288–308 (LAEALAIVHCVATPLLLALFC). Over 309 to 336 (HQTTRTLLPSLPLPERWSSPVDTLGSKS) the chain is Cytoplasmic.

This sequence belongs to the G-protein coupled receptor 1 family. Atypical chemokine receptor subfamily.

It localises to the early endosome. The protein localises to the recycling endosome. The protein resides in the membrane. Its function is as follows. Atypical chemokine receptor that controls chemokine levels and localization via high-affinity chemokine binding that is uncoupled from classic ligand-driven signal transduction cascades, resulting instead in chemokine sequestration, degradation, or transcytosis. Also known as interceptor (internalizing receptor) or chemokine-scavenging receptor or chemokine decoy receptor. Has a promiscuous chemokine-binding profile, interacting with inflammatory chemokines of both the CXC and the CC subfamilies but not with homeostatic chemokines. Acts as a receptor for chemokines including CCL2, CCL5, CCL7, CCL11, CCL13, CCL14, CCL17, CXCL5, CXCL6, IL8/CXCL8, CXCL11, GRO, RANTES, MCP-1 and TARC. May regulate chemokine bioavailability and, consequently, leukocyte recruitment through two distinct mechanisms: when expressed in endothelial cells, it sustains the abluminal to luminal transcytosis of tissue-derived chemokines and their subsequent presentation to circulating leukocytes; when expressed in erythrocytes, serves as blood reservoir of cognate chemokines but also as a chemokine sink, buffering potential surges in plasma chemokine levels. The polypeptide is Atypical chemokine receptor 1 (ACKR1) (Saimiri boliviensis boliviensis (Bolivian squirrel monkey)).